The primary structure comprises 213 residues: Pyridoxine/pyridoxamine 5'-phosphate oxidase (213 aa).

Residues 8 to 11 (RQEY) and K66 contribute to the substrate site. FMN is bound by residues 61–66 (RTVLLK), 76–77 (YT), R82, K83, and Q105. The substrate site is built by Y123, R127, and S131. Residues 140 to 141 (QS) and W185 each bind FMN. 191-193 (RLH) lines the substrate pocket. Position 195 (R195) interacts with FMN.

The protein belongs to the pyridoxamine 5'-phosphate oxidase family. As to quaternary structure, homodimer. It depends on FMN as a cofactor.

It catalyses the reaction pyridoxamine 5'-phosphate + O2 + H2O = pyridoxal 5'-phosphate + H2O2 + NH4(+). The enzyme catalyses pyridoxine 5'-phosphate + O2 = pyridoxal 5'-phosphate + H2O2. It functions in the pathway cofactor metabolism; pyridoxal 5'-phosphate salvage; pyridoxal 5'-phosphate from pyridoxamine 5'-phosphate: step 1/1. The protein operates within cofactor metabolism; pyridoxal 5'-phosphate salvage; pyridoxal 5'-phosphate from pyridoxine 5'-phosphate: step 1/1. Its function is as follows. Catalyzes the oxidation of either pyridoxine 5'-phosphate (PNP) or pyridoxamine 5'-phosphate (PMP) into pyridoxal 5'-phosphate (PLP). The protein is Pyridoxine/pyridoxamine 5'-phosphate oxidase of Bacteroides thetaiotaomicron (strain ATCC 29148 / DSM 2079 / JCM 5827 / CCUG 10774 / NCTC 10582 / VPI-5482 / E50).